The primary structure comprises 476 residues: Adenosylhomocysteinase (476 aa).

Positions 67, 142, and 202 each coordinate substrate. 203–205 (TTT) contributes to the NAD(+) binding site. 2 residues coordinate substrate: K232 and D236. NAD(+) contacts are provided by residues N237, 266 to 271 (GYGDVG), E289, N324, 345 to 347 (IGH), and N390.

Belongs to the adenosylhomocysteinase family. It depends on NAD(+) as a cofactor.

Its subcellular location is the cytoplasm. It catalyses the reaction S-adenosyl-L-homocysteine + H2O = L-homocysteine + adenosine. Its pathway is amino-acid biosynthesis; L-homocysteine biosynthesis; L-homocysteine from S-adenosyl-L-homocysteine: step 1/1. Its function is as follows. May play a key role in the regulation of the intracellular concentration of adenosylhomocysteine. This is Adenosylhomocysteinase from Synechococcus sp. (strain WH7803).